We begin with the raw amino-acid sequence, 269 residues long: 2-dehydro-3-deoxyphosphooctonate aldolase (269 aa).

It belongs to the KdsA family.

It localises to the cytoplasm. The enzyme catalyses D-arabinose 5-phosphate + phosphoenolpyruvate + H2O = 3-deoxy-alpha-D-manno-2-octulosonate-8-phosphate + phosphate. Its pathway is carbohydrate biosynthesis; 3-deoxy-D-manno-octulosonate biosynthesis; 3-deoxy-D-manno-octulosonate from D-ribulose 5-phosphate: step 2/3. It functions in the pathway bacterial outer membrane biogenesis; lipopolysaccharide biosynthesis. The sequence is that of 2-dehydro-3-deoxyphosphooctonate aldolase from Chlamydia trachomatis serovar A (strain ATCC VR-571B / DSM 19440 / HAR-13).